Here is a 272-residue protein sequence, read N- to C-terminus: Anamorsin homolog (272 aa).

The tract at residues 1 to 156 (MDSMMNQKTV…KIGSSFALKK (156 aa)) is N-terminal SAM-like domain. Residues 157–185 (PVTNLFKIDLDDDVDLIDEDSLLTEEDLM) form a linker region. Positions 195, 202, 205, and 207 each coordinate [2Fe-2S] cluster. Residues 195–207 (CETTKKACKNCVC) form a fe-S binding site A region. The [4Fe-4S] cluster site is built by cysteine 233, cysteine 236, cysteine 244, and cysteine 247. 2 consecutive short sequence motifs (cx2C motif) follow at residues 233–236 (CGSC) and 244–247 (CGTC). The fe-S binding site B stretch occupies residues 233 to 247 (CGSCGLGDAFRCGTC).

This sequence belongs to the anamorsin family. Monomer. Interacts with ATR3. The cofactor is [2Fe-2S] cluster. It depends on [4Fe-4S] cluster as a cofactor.

Its subcellular location is the cytoplasm. The protein resides in the mitochondrion intermembrane space. Component of the cytosolic iron-sulfur (Fe-S) protein assembly (CIA) machinery. Required for the maturation of extramitochondrial Fe-S proteins. Part of an electron transfer chain functioning in an early step of cytosolic Fe-S biogenesis, facilitating the de novo assembly of a [4Fe-4S] cluster on the cytosolic Fe-S scaffold complex. Electrons are transferred from NADPH via FAD- and FMN-containing diflavin oxidoreductase TAH18/ATR3. Together with the diflavin oxidoreductase, also required for the assembly of the diferric tyrosyl radical cofactor of ribonucleotide reductase (RNR), probably by providing electrons for reduction during radical cofactor maturation in the catalytic small subunit. Required for embryo development. The chain is Anamorsin homolog from Arabidopsis thaliana (Mouse-ear cress).